The chain runs to 220 residues: 7-cyano-7-deazaguanine synthase (220 aa).

7–17 (LSGGLDSAVCL) contributes to the ATP binding site. Cys191, Cys199, Cys202, and Cys205 together coordinate Zn(2+).

Belongs to the QueC family. Homodimer. Zn(2+) is required as a cofactor.

The enzyme catalyses 7-carboxy-7-deazaguanine + NH4(+) + ATP = 7-cyano-7-deazaguanine + ADP + phosphate + H2O + H(+). The protein operates within purine metabolism; 7-cyano-7-deazaguanine biosynthesis. Catalyzes the ATP-dependent conversion of 7-carboxy-7-deazaguanine (CDG) to 7-cyano-7-deazaguanine (preQ(0)). The sequence is that of 7-cyano-7-deazaguanine synthase from Desulforudis audaxviator (strain MP104C).